Consider the following 455-residue polypeptide: L-serine dehydratase (455 aa).

This sequence belongs to the iron-sulfur dependent L-serine dehydratase family. It depends on [4Fe-4S] cluster as a cofactor.

It catalyses the reaction L-serine = pyruvate + NH4(+). Its pathway is carbohydrate biosynthesis; gluconeogenesis. This Helicobacter pylori (strain J99 / ATCC 700824) (Campylobacter pylori J99) protein is L-serine dehydratase (sdaA).